We begin with the raw amino-acid sequence, 166 residues long: Ribosome maturation factor RimM (166 aa).

The 74-residue stretch at 90–163 folds into the PRC barrel domain; the sequence is EGQYFIKDII…KIVIKAVEEW (74 aa).

This sequence belongs to the RimM family. As to quaternary structure, binds ribosomal protein uS19.

It localises to the cytoplasm. In terms of biological role, an accessory protein needed during the final step in the assembly of 30S ribosomal subunit, possibly for assembly of the head region. Essential for efficient processing of 16S rRNA. May be needed both before and after RbfA during the maturation of 16S rRNA. It has affinity for free ribosomal 30S subunits but not for 70S ribosomes. The protein is Ribosome maturation factor RimM of Clostridium acetobutylicum (strain ATCC 824 / DSM 792 / JCM 1419 / IAM 19013 / LMG 5710 / NBRC 13948 / NRRL B-527 / VKM B-1787 / 2291 / W).